Here is a 294-residue protein sequence, read N- to C-terminus: 7,8-dihydropterin-6-methyl-4-(beta-D-ribofuranosyl)-aminobenzene-5'-phosphate synthase (294 aa).

Substrate-binding residues include Glu-116, Asp-186, Lys-228, and His-265.

It belongs to the metallo-beta-lactamase superfamily. Mg(2+) is required as a cofactor.

The enzyme catalyses 4-(beta-D-ribofuranosyl)aminobenzene 5'-phosphate + (7,8-dihydropterin-6-yl)methyl diphosphate = N-[(7,8-dihydropterin-6-yl)methyl]-4-(beta-D-ribofuranosyl)aniline 5'-phosphate + diphosphate. Its pathway is cofactor biosynthesis; 5,6,7,8-tetrahydromethanopterin biosynthesis. Catalyzes the condensation of 6-hydroxymethyl-7,8-dihydropterin pyrophosphate (DHPP) with 4-(beta-D-ribofuranosyl)-aminobenzene-5'-phosphate (beta-RFA-P) to form 7,8-dihydropterin-6-methyl-4-(beta-D-ribofuranosyl)-aminobenzene-5'-phosphate, a precursor in the biosynthesis of 5,6,7,8-tetrahydromethanopterin (H4MPT). To a lesser extent, is able to condense beta-RFA-P with another arylamine, 1-(4-aminophenyl)-1-deoxy-D-ribitol (APDR), to form 7,8-dihydropterin-6-methyl-1-(4-aminophenyl)-1-deoxy-D-ribitol. Dephosphorylated beta-RFA-P is not a substrate. This Methanocaldococcus jannaschii (strain ATCC 43067 / DSM 2661 / JAL-1 / JCM 10045 / NBRC 100440) (Methanococcus jannaschii) protein is 7,8-dihydropterin-6-methyl-4-(beta-D-ribofuranosyl)-aminobenzene-5'-phosphate synthase.